A 4646-amino-acid polypeptide reads, in one-letter code: Cytoplasmic dynein 1 heavy chain 1 (4646 aa).

Ser2 carries the N-acetylserine modification. Residues 53 to 1867 (EAALEEKSAL…SIQMANAKFN (1815 aa)) form a stem region. Position 70 is a phosphoserine (Ser70). 3 coiled-coil regions span residues 181-202 (SVEK…NIEI), 455-478 (AHRK…QLRA), and 543-566 (TEAW…RITA). The interaction with DYNC1I2 stretch occupies residues 448–703 (MVWRINPAHR…NTQEIFDDWA (256 aa)). An interaction with DYNC1LI2 region spans residues 651 to 802 (AKQIDRQLTA…EKVEERNTIS (152 aa)). N6-acetyllysine is present on Lys1125. 2 coiled-coil regions span residues 1171–1252 (TYVQ…AVES) and 1357–1373 (RKLR…LKSF). Phosphoserine is present on Ser1230. 4 AAA regions span residues 1868 to 2099 (YGFE…VLVS), 2180 to 2452 (EELK…LTRL), 2556 to 2805 (EVET…WVRG), and 2899 to 3168 (VFYE…GGRT). Residues 1906-1913 (GPAGTGKT) and 2224-2231 (GPSGSGKS) each bind ATP. Positions 2390-2411 (GEDEAQRRRKGKEDEGEEAASP) are disordered. ATP contacts are provided by residues 2595-2602 (GPPGSGKT) and 2937-2944 (GVSGAGKT). Coiled coils occupy residues 3189–3275 (EKRS…ADKQ), 3396–3500 (AIAQ…KNQM), and 3737–3800 (EFQL…VSQQ). A stalk region spans residues 3189-3500 (EKRSELEEQQ…KTSETFKNQM (312 aa)). Lys3480 is modified (N6-acetyllysine). AAA regions lie at residues 3553–3782 (LSNA…EVTR) and 4005–4221 (AHMF…TVDT). Position 4162 is a phosphoserine (Ser4162). Lys4283 is subject to N6-acetyllysine. Phosphothreonine is present on Thr4366. Phosphoserine is present on Ser4368.

This sequence belongs to the dynein heavy chain family. Homodimer. The cytoplasmic dynein 1 complex consists of two catalytic heavy chains (HCs) and a number of non-catalytic subunits presented by intermediate chains (ICs), light intermediate chains (LICs) and light chains (LCs); the composition seems to vary in respect to the IC, LIC and LC composition. The heavy chain homodimer serves as a scaffold for the probable homodimeric assembly of the respective non-catalytic subunits. The ICs and LICs bind directly to the HC dimer and dynein LCs assemble on the IC dimer. Interacts with DYNC1LI1; DYNC1LI1 and DYNC1LI2 bind mutually exclusive to DYNC1H1. Interacts with DYNC1LI2; DYNC1LI1 and DYNC1LI2 bind mutually exclusive to DYNC1H1. Interacts with DYNC1I2. Interacts with BICD2. Interacts with isoform 2 of CRACR2A. Interacts with DNALI1.

The protein resides in the cytoplasm. The protein localises to the cytoskeleton. Cytoplasmic dynein 1 acts as a motor for the intracellular retrograde motility of vesicles and organelles along microtubules. Dynein has ATPase activity; the force-producing power stroke is thought to occur on release of ADP. Plays a role in mitotic spindle assembly and metaphase plate congression. This is Cytoplasmic dynein 1 heavy chain 1 from Homo sapiens (Human).